The chain runs to 537 residues: Phosphoenolpyruvate carboxykinase (ATP) (537 aa).

Residues Arg61, Tyr195, and Lys201 each coordinate substrate. ATP-binding positions include Lys201, His220, and 236 to 244 (GLSGTGKTT). Mn(2+)-binding residues include Lys201 and His220. Asp257 contacts Mn(2+). ATP contacts are provided by Glu285, Arg323, and Thr448. Residue Arg323 participates in substrate binding.

Belongs to the phosphoenolpyruvate carboxykinase (ATP) family. It depends on Mn(2+) as a cofactor.

The protein localises to the cytoplasm. It carries out the reaction oxaloacetate + ATP = phosphoenolpyruvate + ADP + CO2. Its pathway is carbohydrate biosynthesis; gluconeogenesis. In terms of biological role, involved in the gluconeogenesis. Catalyzes the conversion of oxaloacetate (OAA) to phosphoenolpyruvate (PEP) through direct phosphoryl transfer between the nucleoside triphosphate and OAA. The sequence is that of Phosphoenolpyruvate carboxykinase (ATP) from Rhodopseudomonas palustris (strain TIE-1).